The primary structure comprises 149 residues: MLKQAKGRIGRNAVLLALFEEEEEGKITAHLDNLQWRYCKGKVGSMELQKIVASVETAAKRNNVVNGELYREMHALYHAVVEAVQGVTRGQVELGDLMRTVGLRFAVVRGNPYENSKEGEWIAVALYGTIGAPIRGLEHETIGLGINHI.

It belongs to the HutP family. In terms of assembly, homohexamer.

Antiterminator that binds to cis-acting regulatory sequences on the mRNA in the presence of histidine, thereby suppressing transcription termination and activating the hut operon for histidine utilization. In Geobacillus sp. (strain WCH70), this protein is Hut operon positive regulatory protein.